Reading from the N-terminus, the 160-residue chain is Allophycocyanin alpha chain (160 aa).

Residue Asn-70 is modified to N4-methylasparagine. Cys-80 is a binding site for (2R,3E)-phycocyanobilin.

Belongs to the phycobiliprotein family. In terms of assembly, component of the phycobilisome. Heterodimer of an alpha and a beta chain. Contains one covalently linked phycocyanobilin chromophore.

The protein resides in the cellular thylakoid membrane. Functionally, light-harvesting photosynthetic bile pigment-protein from the phycobiliprotein complex. Allophycocyanin has a maximum absorption at approximately 650 nanometers. The sequence is that of Allophycocyanin alpha chain (apcA) from Anabaena cylindrica.